We begin with the raw amino-acid sequence, 289 residues long: HTH-type transcriptional regulator SoxR (289 aa).

In terms of domain architecture, HTH lysR-type spans 1–58 (MEIKDLQIFQKVVEYGSVSKAAKSLNYVQSYVTVRIQKLEEELQTELFHRSSRGMVLN). The segment at residues 18–37 (VSKAAKSLNYVQSYVTVRIQ) is a DNA-binding region (H-T-H motif).

It belongs to the LysR transcriptional regulatory family.

Functionally, transcriptional repressor of soxA gene expression. The polypeptide is HTH-type transcriptional regulator SoxR (soxR) (Arthrobacter sp. (strain TE1826)).